Here is an 81-residue protein sequence, read N- to C-terminus: Cytochrome b559 subunit alpha (81 aa).

The heme site is built by arginine 18 and histidine 23. A helical membrane pass occupies residues 19–40 (YWVIHSITIPMLFIAGWLFVST).

Belongs to the PsbE/PsbF family. As to quaternary structure, heterodimer of an alpha subunit and a beta subunit. PSII is composed of 1 copy each of membrane proteins PsbA, PsbB, PsbC, PsbD, PsbE, PsbF, PsbH, PsbI, PsbJ, PsbK, PsbL, PsbM, PsbT, PsbX, PsbY, PsbZ, Psb30/Ycf12, peripheral proteins PsbO, CyanoQ (PsbQ), PsbU, PsbV and a large number of cofactors. It forms dimeric complexes. It depends on heme b as a cofactor.

The protein localises to the cellular thylakoid membrane. Its function is as follows. This b-type cytochrome is tightly associated with the reaction center of photosystem II (PSII). PSII is a light-driven water:plastoquinone oxidoreductase that uses light energy to abstract electrons from H(2)O, generating O(2) and a proton gradient subsequently used for ATP formation. It consists of a core antenna complex that captures photons, and an electron transfer chain that converts photonic excitation into a charge separation. The chain is Cytochrome b559 subunit alpha from Synechocystis sp. (strain ATCC 27184 / PCC 6803 / Kazusa).